A 132-amino-acid polypeptide reads, in one-letter code: Cytochrome B5 isoform C (132 aa).

Positions 2–78 constitute a Cytochrome b5 heme-binding domain; sequence ANLISFHDVA…MKKYCIGDVD (77 aa). Positions 37 and 61 each coordinate heme. A helical membrane pass occupies residues 110 to 129; it reads LLIYLIPLLILGVAFALRFY.

This sequence belongs to the cytochrome b5 family. As to quaternary structure, interacts with CER1, BI-1, FAH1 and FAH2.

It localises to the endoplasmic reticulum membrane. Its function is as follows. Membrane bound hemoprotein which function as an electron carrier for several membrane bound oxygenases, including fatty acid desaturases. This Arabidopsis thaliana (Mouse-ear cress) protein is Cytochrome B5 isoform C.